Here is a 336-residue protein sequence, read N- to C-terminus: Probable assembly chaperone of rpl4 (336 aa).

TPR repeat units lie at residues 39-72, 75-108, 110-143, and 162-195; these read GRAFELLGEVYAELADVKKARSAFKEAVSRSKNL, DQGYEKYLWLAQINDNGSKALKLYQKGVTILERL, IDKGEDADLKKKIQGAYCSIAELFMTDLCMQPDA, and AEALQTLASMRISQQKIEEAKDALSKCLQSISRA. Residues 316-336 are disordered; sequence DEENEEAEWETSENEEEMDED.

Belongs to the ACL4 family.

It is found in the cytoplasm. The protein resides in the nucleus. The protein localises to the nucleolus. Functionally, acts as a chaperone for the L4 ribosomal subunit encoded by rpl4A and rpl4B, required for hierarchical ribosome assembly. Shields ribosomal protein L4 until timely release and insertion into the pre-ribosome is possible, once ribosomal protein L18 is present. This chain is Probable assembly chaperone of rpl4, found in Schizosaccharomyces pombe (strain 972 / ATCC 24843) (Fission yeast).